The primary structure comprises 36 residues: AGCKYLFGSCKEDSDCCKHLGCRRKAPQYCGWDGTF.

3 disulfides stabilise this stretch: cysteine 3–cysteine 17, cysteine 10–cysteine 22, and cysteine 16–cysteine 30. The residue at position 36 (phenylalanine 36) is a Phenylalanine amide.

Belongs to the neurotoxin 10 (Hwtx-1) family. In terms of tissue distribution, expressed by the venom gland.

The protein resides in the secreted. Gating-modifier toxin that targets voltage-gated sodium channels. Inhibits the inactivation of Nav1.7/SCN9A. The sequence is that of Beta/delta/mu-theraphotoxin-Pv1 from Poecilotheria vittata (Ghost ornamental tarantula).